The sequence spans 370 residues: Uroporphyrinogen decarboxylase (370 aa).

Substrate-binding positions include 29–33 (RQAGR), aspartate 79, tyrosine 155, serine 210, and histidine 342.

Belongs to the uroporphyrinogen decarboxylase family. Homodimer.

Its subcellular location is the cytoplasm. It carries out the reaction uroporphyrinogen III + 4 H(+) = coproporphyrinogen III + 4 CO2. The protein operates within porphyrin-containing compound metabolism; protoporphyrin-IX biosynthesis; coproporphyrinogen-III from 5-aminolevulinate: step 4/4. Functionally, catalyzes the decarboxylation of four acetate groups of uroporphyrinogen-III to yield coproporphyrinogen-III. This Variovorax paradoxus (strain S110) protein is Uroporphyrinogen decarboxylase.